A 570-amino-acid polypeptide reads, in one-letter code: Adenine deaminase 2 (570 aa).

It belongs to the metallo-dependent hydrolases superfamily. Adenine deaminase family. It depends on Mn(2+) as a cofactor.

It carries out the reaction adenine + H2O + H(+) = hypoxanthine + NH4(+). This chain is Adenine deaminase 2, found in Carboxydothermus hydrogenoformans (strain ATCC BAA-161 / DSM 6008 / Z-2901).